The primary structure comprises 332 residues: Glyoxylate reductase (332 aa).

Residues 155–158 and 236–238 each bind NADP(+); these read MGRI and TSR. Residues Arg238 and Glu267 contribute to the active site. His286 serves as the catalytic Proton donor. 286-288 is a binding site for NADP(+); the sequence is HAA.

This sequence belongs to the D-isomer specific 2-hydroxyacid dehydrogenase family. GyaR subfamily. Homodimer.

The protein resides in the cytoplasm. The enzyme catalyses glycolate + NAD(+) = glyoxylate + NADH + H(+). The protein is Glyoxylate reductase of Korarchaeum cryptofilum (strain OPF8).